A 487-amino-acid chain; its full sequence is MPTDERLSDDQLQRIANDLRDNWHTGREVDFEEAIAFHESLPASKQFAQVLESADQPLLQPRAGVPCLEEQIDLLRYLQDEGGADLLPTTIDSYTRDNEYEKAEEGLAASRGSDENELNGFPAVNHGVEDCRRLIRALDAPVEVRHGTPDARLLAMVTLAGGFQSFEGGPISYNIPYTKRHDLATTIEHWQFVDRLCGAYTERGVTINREPFGPLTGTLVPPSIAIAVMLVEGELAATQGVRSLTLGYGQVGNLVQDVAALRALRKLGNEYLRDEVTVTTVFHEWMGGFPPDEARANGVISLGGATAAVAQPDKVITKSAQEFQGVPTKEANAAGLRTTRQLIDMMIEQDIDLGGIDEEQALIERETRALMDAIYEAGDGDVAQGVINAFDSGALDVPFAPSDAAKGAVLPARDDDGRVRIFEFADLALPDDIKEIHAARLGERAETEGRDQSFRMVADDVDAISDGKLIGRPGGDNSPAGGASDAD.

Arginine 62 provides a ligand contact to L-glutamate. Position 64 (glycine 64) interacts with adenosylcob(III)alamin. Arginine 96 is a binding site for L-glutamate. Asparagine 119 contributes to the adenosylcob(III)alamin binding site. Residues 145–146 (RH), glutamate 167, and tyrosine 173 contribute to the L-glutamate site. Position 176 (proline 176) interacts with adenosylcob(III)alamin. Position 177 (tyrosine 177) interacts with L-glutamate. Adenosylcob(III)alamin-binding residues include phenylalanine 289, lysine 318, and glutamate 322. The disordered stretch occupies residues 465–487 (SDGKLIGRPGGDNSPAGGASDAD).

It belongs to the methylaspartate mutase GlmE subunit family. In terms of assembly, heterotetramer composed of 2 epsilon subunits (GlmE) and 2 sigma subunits (GlmS). GlmE exists as a homodimer and GlmS as a monomer. Requires adenosylcob(III)alamin as cofactor.

The catalysed reaction is (2S,3S)-3-methyl-L-aspartate = L-glutamate. Its pathway is amino-acid degradation; L-glutamate degradation via mesaconate pathway; acetate and pyruvate from L-glutamate: step 1/4. Catalyzes the carbon skeleton rearrangement of L-glutamate to L-threo-3-methylaspartate ((2S,3S)-3-methylaspartate). This is Glutamate mutase epsilon subunit from Haloarcula marismortui (strain ATCC 43049 / DSM 3752 / JCM 8966 / VKM B-1809) (Halobacterium marismortui).